The primary structure comprises 1372 residues: DNA-directed RNA polymerase subunit beta (1372 aa).

This sequence belongs to the RNA polymerase beta chain family. In terms of assembly, the RNAP catalytic core consists of 2 alpha, 1 beta, 1 beta' and 1 omega subunit. When a sigma factor is associated with the core the holoenzyme is formed, which can initiate transcription.

The catalysed reaction is RNA(n) + a ribonucleoside 5'-triphosphate = RNA(n+1) + diphosphate. In terms of biological role, DNA-dependent RNA polymerase catalyzes the transcription of DNA into RNA using the four ribonucleoside triphosphates as substrates. The protein is DNA-directed RNA polymerase subunit beta of Psychrobacter cryohalolentis (strain ATCC BAA-1226 / DSM 17306 / VKM B-2378 / K5).